The following is a 74-amino-acid chain: WAP four-disulfide core domain protein 18 (74 aa).

Residues 1 to 24 form the signal peptide; sequence MKTATVFVLVALIFMTMTTAWALS. A WAP domain is found at 26-73; that stretch reads PKEKPGACPKPPPRSFGTCDERCTGDGSCSGNMKCCSNGCGHACKPPV.

The protein localises to the secreted. Functionally, could have proteinase inhibiting capacity. The protein is WAP four-disulfide core domain protein 18 (WFDC18) of Bos taurus (Bovine).